A 24-amino-acid polypeptide reads, in one-letter code: Humanin (24 aa).

Residues Met-1–Leu-12 form a sufficient to interact with BID and BIM and to suppress BID and BIM activity region. Residues Pro-3–Pro-19 form a sufficient for neuroprotective activity region. Residues Gly-5–Leu-12 form a sufficient to interact with MPP8 region. 2 required for secretion regions span residues Leu-9–Leu-11 and Pro-19–Val-20.

In terms of assembly, homodimer. Interacts with amyloid-beta protein 42 (Abeta42); the interaction prevents Abeta42 fibril formation. Interacts with BAX; forms fibers with BAX which results in BAX conformational changes and sequestering of BAX into the fibers, preventing BAX activation. Interacts with both full-length BID and cleaved BID p15; forms fibers with BID which results in BID conformational changes and sequestering of BID into the fibers, preventing BID activation. Interacts with BIM isoform BimEL but not with BIM isoforms BimL or BimS; the interaction prevents BIM-induced apoptosis. Interacts with IGFBP3; competes with importin KPNB1 for binding to IGFBP3, blocking IGFBP3 nuclear import. Interacts with TRIM11. Interacts with MPP8. Expressed in testis, seminal plasma and sperm (at protein level). Higher seminal plasma levels are associated with normospermia than with oligospermia, asthenospermia or oligoasthenospermia (at protein level). Higher sperm levels are associated with normospermia than with asthenospermia (at protein level). Expressed in retinal epithelial cells (at protein level). Expressed in the heart, skeletal muscle, kidney and liver. Lesser but significant expression is observed in the brain and the gastrointestinal tract. Expressed in the AD brain, where it is found in some of the large intact neurons of the occipital lobes and small and round reactive glial cells in the hippocampus.

The protein resides in the secreted. It localises to the cytoplasm. Its subcellular location is the cell projection. The protein localises to the cilium. It is found in the flagellum. The protein resides in the nucleus. It localises to the mitochondrion. Its function is as follows. Plays a role as a neuroprotective factor. Protects against neuronal cell death induced by multiple different familial Alzheimer disease genes and amyloid-beta proteins in Alzheimer disease. Mediates its neuroprotective effect by interacting with a receptor complex composed of IL6ST/GP130, IL27RA/WSX1 and CNTFR. Also acts as a ligand for G-protein coupled receptors FPR2/FPRL1 and FPR3/FPRL2. Inhibits amyloid-beta protein 40 fibril formation. Also inhibits amyloid-beta protein 42 fibril formation. Suppresses apoptosis by binding to BAX and preventing the translocation of BAX from the cytosol to mitochondria. Also suppresses apoptosis by binding to BID and inhibiting the interaction of BID with BAX and BAK which prevents oligomerization of BAX and BAK and suppresses release of apoptogenic proteins from mitochondria. Forms fibers with BAX and also with BID, inducing BAX and BID conformational changes and sequestering them into the fibers which prevents their activation. Can also suppress apoptosis by interacting with BIM isoform BimEL, inhibiting BimEL-induced activation of BAX, blocking oligomerization of BAX and BAK, and preventing release of apoptogenic proteins from mitochondria. Plays a role in up-regulation of anti-apoptotic protein BIRC6/APOLLON, leading to inhibition of neuronal cell death. Binds to IGFBP3 and specifically blocks IGFBP3-induced cell death. Competes with importin KPNB1 for binding to IGFBP3 which is likely to block IGFBP3 nuclear import. Induces chemotaxis of mononuclear phagocytes via FPR2/FPRL1. Reduces aggregation and fibrillary formation by suppressing the effect of APP on mononuclear phagocytes and acts by competitively inhibiting the access of FPR2 to APP. Protects retinal pigment epithelium (RPE) cells against oxidative stress-induced and endoplasmic reticulum (ER) stress-induced apoptosis. Promotes mitochondrial biogenesis in RPE cells following oxidative stress and promotes STAT3 phosphorylation which leads to inhibition of CASP3 release. Also reduces CASP4 levels in RPE cells, suppresses ER stress-induced mitochondrial superoxide production and plays a role in up-regulation of mitochondrial glutathione. Reduces testicular hormone deprivation-induced apoptosis of germ cells at the nonandrogen-sensitive stages of the seminiferous epithelium cycle. Protects endothelial cells against free fatty acid-induced inflammation by suppressing oxidative stress, reducing expression of TXNIP and inhibiting activation of the NLRP3 inflammasome which inhibits expression of pro-inflammatory cytokines IL1B and IL18. Protects against high glucose-induced endothelial cell dysfunction by mediating activation of ERK5 which leads to increased expression of transcription factor KLF2 and prevents monocyte adhesion to endothelial cells. Inhibits the inflammatory response in astrocytes. Increases the expression of PPARGC1A/PGC1A in pancreatic beta cells which promotes mitochondrial biogenesis. Increases insulin sensitivity. This chain is Humanin, found in Homo sapiens (Human).